The following is a 669-amino-acid chain: RNA-binding protein 14 (669 aa).

RRM domains are found at residues 1–73 (MKIF…MSRP) and 79–149 (WKIF…LSTK). Residues Lys126, Lys135, Lys138, Lys149, and Lys153 each participate in a glycyl lysine isopeptide (Lys-Gly) (interchain with G-Cter in SUMO2) cross-link. Disordered stretches follow at residues 147–175 (STKG…DTAF) and 193–232 (NSTG…PLTA). A Phosphoserine modification is found at Ser161. Lys164 is modified (N6-acetyllysine; alternate). A Glycyl lysine isopeptide (Lys-Gly) (interchain with G-Cter in SUMO2); alternate cross-link involves residue Lys164. A Phosphothreonine modification is found at Thr206. Residues Ser220, Ser242, Ser244, Ser256, Ser272, and Ser280 each carry the phosphoserine modification. Positions 284 to 303 (PYRGQLASPSSQSAAASSLG) are disordered. Residues 287–303 (GQLASPSSQSAAASSLG) show a composition bias toward low complexity. Residues 307–354 (GAQPSASALSSYGGQAAAASSLNSYGAQGSSLASYGNQPSSYGAQAAS) are TRBP-interacting domain; interaction with STIL. Ser520, Ser523, Ser527, and Ser562 each carry phosphoserine. The tract at residues 566–592 (VANANSTPPPYERTRLSPPRASYDDPY) is disordered. A Phosphothreonine modification is found at Thr572. A Phosphoserine modification is found at Ser582. Lys600 participates in a covalent cross-link: Glycyl lysine isopeptide (Lys-Gly) (interchain with G-Cter in SUMO2). 6 positions are modified to phosphoserine: Ser618, Ser620, Ser623, Ser627, Ser643, and Ser649.

In terms of assembly, interacts with NCOA6, CITED1 and XRCC5/KU86. Interacts with SS18. Interacts with STIL and interferes with its interaction with CPAP. Interacts with gamma-tubulin. Part of the HDP-RNP complex composed of at least HEXIM1, PRKDC, XRCC5, XRCC6, paraspeckle proteins (SFPQ, NONO, PSPC1, RBM14, and MATR3) and NEAT1 RNA.

The protein localises to the nucleus. The protein resides in the nucleolus. Its subcellular location is the cytoplasm. Its function is as follows. May function as a nuclear receptor coactivator, enhancing transcription through other coactivators such as NCOA6 and CITED1. Regulates centriole biogenesis by suppressing the formation of aberrant centriolar protein complexes in the cytoplasm and thus preserving mitotic spindle integrity. Prevents the formation of the STIL-CPAP complex (which can induce the formation of aberrant centriolar protein complexes) by interfering with the interaction of STIL with CPAP. Plays a role in the regulation of DNA virus-mediated innate immune response by assembling into the HDP-RNP complex, a complex that serves as a platform for IRF3 phosphorylation and subsequent innate immune response activation through the cGAS-STING pathway. This chain is RNA-binding protein 14 (RBM14), found in Pongo abelii (Sumatran orangutan).